Consider the following 759-residue polypeptide: Short transient receptor potential channel 1 (759 aa).

The interval 1-30 is disordered; that stretch reads MMAALYPSTDLSGASSSSLPSSPSSSSPNE. At 1 to 352 the chain is on the cytoplasmic side; sequence MMAALYPSTD…GRIIHTPFMK (352 aa). The span at 15-28 shows a compositional bias: low complexity; sequence SSSSLPSSPSSSSP. ANK repeat units follow at residues 46–75, 83–112, and 124–153; these read LNEKLFLLACDKGDYYMVKKILEENSSGDL, LGRNAVTITIENENLDILQLLLDYGCQKLM, and MDVAPVILAAHRNNYEILTMLLKQDVSLPK. The helical transmembrane segment at 353 to 373 threads the bilayer; sequence FIIHGASYFTFLLLLNLYSLV. Residues 374–381 are Extracellular-facing; it reads YNEDKKNT. The chain crosses the membrane as a helical span at residues 382–402; that stretch reads MGPALERIDYLLILWIIGMIW. Residues 403 to 461 are Cytoplasmic-facing; that stretch reads SDIKRLWYEGLEDFLEESRNQLSFVMNSLYLATFALKVVAHNKFHDFADRKDWDAFHPT. Residues 462–482 traverse the membrane as a helical segment; sequence LVAEGLFAFANVLSYLRLFFM. Residues 483 to 505 lie on the Extracellular side of the membrane; sequence YTTSSILGPLQISMGQMLQDFGK. The helical transmembrane segment at 506-526 threads the bilayer; sequence FLGMFLLVLFSFTIGLTQLYD. Residues 527–552 lie on the Cytoplasmic side of the membrane; it reads KGYTPKEQKDCVGIFCEQQSNDTFHS. The chain crosses the membrane as a helical span at residues 553–573; sequence FIGTCFALFWYIFSLAHVAIF. Topologically, residues 574–582 are extracellular; sequence VTRFSYGEE. The helical transmembrane segment at 583–603 threads the bilayer; that stretch reads LQSFVGAVIVGTYNVVVVIVL. At 604-759 the chain is on the cytoplasmic side; the sequence is TKLLVAMLHK…SKYAMFYPRN (156 aa).

Belongs to the transient receptor (TC 1.A.4) family. STrpC subfamily. TRPC1 sub-subfamily. In terms of assembly, homotetramer and heterotetramer with TRPC4 and/or TRPC5. Interacts with TRPC4 and TRPC5. Interacts with ITPR3. Interacts with MX1 and RNF24. Interacts with FKBP4. Interacts with TRPC4AP. Interacts with PLSCR1. Interacts with PKD2L2. Forms a heterotetramer with PKD2 with a 2:2 stoichiometry; has distinct channel properties separate from PKD2 or TRPC1 homomers alone. Post-translationally, activation of PRKCA induces phosphorylation of TRPC1 and subsequent Ca2+ entry into cells.

It localises to the cell membrane. It carries out the reaction Ca(2+)(in) = Ca(2+)(out). Functionally, forms a receptor-activated non-selective calcium permeant cation channel. Probably is operated by a phosphatidylinositol second messenger system activated by receptor tyrosine kinases or G-protein coupled receptors. Also activated by intracellular calcium store depletion. The sequence is that of Short transient receptor potential channel 1 (TRPC1) from Oryctolagus cuniculus (Rabbit).